The primary structure comprises 309 residues: Verprolin (309 aa).

A compositionally biased stretch (pro residues) spans 1–13; that stretch reads MAPAPPPPPPAPA. A disordered region spans residues 1-273; that stretch reads MAPAPPPPPP…PNRVDDHGRF (273 aa). Residues 27-44 form the WH2 domain; sequence DRSALLNSIQKGKKLKKA. A compositionally biased stretch (polar residues) spans 82-91; that stretch reads LPTSSNNTQQ. Positions 141–207 are enriched in pro residues; sequence TSAPPRPSIP…PPKVPPPPLS (67 aa).

It belongs to the verprolin family. As to quaternary structure, interacts with wsp1. Interacts with myo1 (via SH3 domain). Interacts with actin monomers.

The protein resides in the cytoplasm. It localises to the cytoskeleton. Involved in cytoskeletal organization and cellular growth. May exert its effects on the cytoskeleton directly, or indirectly via proline-binding proteins such as profilin or proteins possessing SH3 domains. Plays a role in actin patch assembly by enhancing the ability of myo1 to stimulate actin polymerization by the Arp2/3 complex. This is Verprolin from Schizosaccharomyces pombe (strain 972 / ATCC 24843) (Fission yeast).